Here is a 496-residue protein sequence, read N- to C-terminus: MVEADHPGKLFIGGLNRETNEKMLKAVFGKHGPISEVLLIKDRTSKSRGFAFITFENPADAKNAAKDMNGKSLHGKAIKVEQAKKPSFQSGGRRRPPASSRNRSPSGSLRSARGSRGGTRGWLPSQEGHLDDGGYTPDLKMSYSRGLIPVKRGPSSRSGGPPPKKSAPSAVARSNSWMGSQGPMSQRRENYGVPPRRATISSWRNDRMSTRHDGYATNDGNHPSCQETRDYAPPSRGYAYRDNGHSNRDEHSSRGYRNHRSSRETRDYAPPSRGHAYRDYGHSRRDESYSRGYRNRRSSRETREYAPPSRGHGYRDYGHSRRHESYSRGYRNHPSSRETRDYAPPHRDYAYRDYGHSSWDEHSSRGYSYHDGYGEALGRDHSEHLSGSSYRDALQRYGTSHGAPPARGPRMSYGGSTCHAYSNTRDRYGRSWESYSSCGDFHYCDREHVCRKDQRNPPSLGRVLPDPREACGSSSYVASIVDGGESRSEKGDSSRY.

In terms of domain architecture, RRM spans 8–85 (GKLFIGGLNR…KAIKVEQAKK (78 aa)). 2 disordered regions span residues 67-349 (DMNG…HRDY) and 452-496 (KDQR…SSRY). 2 stretches are compositionally biased toward low complexity: residues 97-114 (PASS…SARG) and 149-159 (PVKRGPSSRSG). Residues 175 to 184 (NSWMGSQGPM) are compositionally biased toward polar residues. 6 stretches are compositionally biased toward basic and acidic residues: residues 204 to 214 (RNDRMSTRHDG), 242 to 253 (DNGHSNRDEHSS), 276 to 289 (AYRD…DESY), 313 to 326 (GYRD…HESY), 335 to 349 (SSRE…HRDY), and 484 to 496 (GESR…SSRY).

In terms of assembly, interacts with splicing factor proteins SFRS3/SRP20, TRA2B/SFRS10, KHDRBS1/SAM68 and KHDRBS3. In terms of tissue distribution, testis-specific.

It localises to the nucleus. Functionally, RNA-binding protein which may be involved in spermatogenesis. Required for sperm development, possibly by participating in pre-mRNA splicing in the testis. The polypeptide is RNA-binding motif protein, Y chromosome, family 1 member D (RBMY1D) (Homo sapiens (Human)).